The chain runs to 467 residues: tRNA-2-methylthio-N(6)-dimethylallyladenosine synthase (467 aa).

The tract at residues 1 to 20 (MSDDTTQIEPAMAQETSPRA) is disordered. The MTTase N-terminal domain maps to 23–143 (RKVFVKTYGC…LPNALARVRG (121 aa)). The [4Fe-4S] cluster site is built by C32, C68, C106, C184, C188, and C191. A Radical SAM core domain is found at 170–402 (RKRGVSAFLT…QALLSAQQYA (233 aa)). The region spanning 405 to 467 (DSMIGRKMDV…TNSLIAQKLA (63 aa)) is the TRAM domain.

The protein belongs to the methylthiotransferase family. MiaB subfamily. In terms of assembly, monomer. The cofactor is [4Fe-4S] cluster.

It localises to the cytoplasm. The enzyme catalyses N(6)-dimethylallyladenosine(37) in tRNA + (sulfur carrier)-SH + AH2 + 2 S-adenosyl-L-methionine = 2-methylsulfanyl-N(6)-dimethylallyladenosine(37) in tRNA + (sulfur carrier)-H + 5'-deoxyadenosine + L-methionine + A + S-adenosyl-L-homocysteine + 2 H(+). In terms of biological role, catalyzes the methylthiolation of N6-(dimethylallyl)adenosine (i(6)A), leading to the formation of 2-methylthio-N6-(dimethylallyl)adenosine (ms(2)i(6)A) at position 37 in tRNAs that read codons beginning with uridine. This chain is tRNA-2-methylthio-N(6)-dimethylallyladenosine synthase, found in Brucella abortus (strain S19).